The primary structure comprises 594 residues: Lysine--tRNA ligase cla4 (594 aa).

Positions 1–62 are disordered; sequence MADPGAVKET…KETSSEQDEA (62 aa). Residues 18 to 42 are compositionally biased toward basic and acidic residues; the sequence is TGEKVSKTELKKRLKSRAKEAEKQK.

Belongs to the class-II aminoacyl-tRNA synthetase family. In terms of assembly, homodimer.

The enzyme catalyses tRNA(Lys) + L-lysine + ATP = L-lysyl-tRNA(Lys) + AMP + diphosphate. In terms of biological role, involved in self-resistance to cladosporin since this product is an inhibitor of lysyl-tRNA synthetase. Cla4 may not be inhibited by cladosporin, thereby imparting cladosporin resistance. When cladosporin biosynthesis is switched on, transcription of cla4 will then be necessary for continued protein synthesis in C.cladosporioides. The chain is Lysine--tRNA ligase cla4 from Cladosporium cladosporioides.